The primary structure comprises 400 residues: Argininosuccinate synthase (400 aa).

9-17 is a binding site for ATP; it reads AYSGGLDTS. Residue Tyr-87 participates in L-citrulline binding. Gly-117 contacts ATP. L-aspartate-binding residues include Thr-119, Asn-123, and Asp-124. Asn-123 is an L-citrulline binding site. 5 residues coordinate L-citrulline: Arg-127, Ser-176, Ser-185, Glu-261, and Tyr-273.

Belongs to the argininosuccinate synthase family. Type 1 subfamily. As to quaternary structure, homotetramer.

The protein resides in the cytoplasm. It catalyses the reaction L-citrulline + L-aspartate + ATP = 2-(N(omega)-L-arginino)succinate + AMP + diphosphate + H(+). The protein operates within amino-acid biosynthesis; L-arginine biosynthesis; L-arginine from L-ornithine and carbamoyl phosphate: step 2/3. The sequence is that of Argininosuccinate synthase from Pelodictyon phaeoclathratiforme (strain DSM 5477 / BU-1).